A 281-amino-acid polypeptide reads, in one-letter code: Mad-like protein 1 (281 aa).

The span at 71-80 shows a compositional bias: low complexity; that stretch reads SCASNASTSS. The disordered stretch occupies residues 71–105; sequence SCASNASTSSQPYCSSPPARKSSKHSRTAHNELEK. Positions 95–108 are basic motif; sequence HSRTAHNELEKTRR. Residues 95–147 form the bHLH domain; that stretch reads HSRTAHNELEKTRRANLRGCLETLKMLVPCVSDATRNTTLALLTRARDHIIEL. The segment at 109–147 is helix-loop-helix motif; sequence ANLRGCLETLKMLVPCVSDATRNTTLALLTRARDHIIEL. Residues 144–185 are a coiled coil; that stretch reads IIELQDSNAAQMKKLNDLRDEQDELVAELAQLQADEEVAQAT. The disordered stretch occupies residues 189 to 213; sequence CQTLSQSRPESRASSFTSTSSRDSP. Residues 200 to 212 show a composition bias toward low complexity; the sequence is RASSFTSTSSRDS.

As to quaternary structure, forms heterodimer with mxl-1 in the presence and absence of DNA. Post-translationally, ubiquitinated. In terms of tissue distribution, expressed in intestinal cells in adults. Expressed in D-type motor neuron cell bodies.

The protein localises to the nucleus. In terms of biological role, transcriptional regulator which binds to the E box motif 5'-CACGTG-3', when in a heterodimeric complex with mxl-1. Involved in the control of lifespan in response to dietary restriction, the decline in protein homeostasis associated with normal aging, germline signaling and may overlap with the insulin-like signaling pathway. Plays a role in autophagy. Involved in promoting infection by the microsporidian pathogen N.parisii, possibly together with transcription factors pha-4 and zip-10. In response to neuronal injury, mdl-1 is targeted by sdz-33 for ubiquitin-mediated degradation, probably thereby reducing levels of mdl-1-mxl-1 heterodimers, allowing free mxl-1 to form complexes with tdpt-1 and thus inhibiting tdpt-1-dependent sumoylation of ets-4. The sequence is that of Mad-like protein 1 from Caenorhabditis elegans.